Consider the following 244-residue polypeptide: Phosphoadenosine 5'-phosphosulfate reductase (244 aa).

C239 acts as the Nucleophile; cysteine thiosulfonate intermediate in catalysis.

This sequence belongs to the PAPS reductase family. CysH subfamily.

It localises to the cytoplasm. It carries out the reaction [thioredoxin]-disulfide + sulfite + adenosine 3',5'-bisphosphate + 2 H(+) = [thioredoxin]-dithiol + 3'-phosphoadenylyl sulfate. The protein operates within sulfur metabolism; hydrogen sulfide biosynthesis; sulfite from sulfate: step 3/3. Catalyzes the formation of sulfite from phosphoadenosine 5'-phosphosulfate (PAPS) using thioredoxin as an electron donor. In Pectobacterium carotovorum subsp. carotovorum (strain PC1), this protein is Phosphoadenosine 5'-phosphosulfate reductase.